We begin with the raw amino-acid sequence, 106 residues long: uncharacterized protein (106 aa).

Helical transmembrane passes span 10 to 30 (VYIQ…VAFV) and 65 to 85 (LDFA…LLAY).

It is found in the membrane. This is an uncharacterized protein from Saccharomyces cerevisiae (strain ATCC 204508 / S288c) (Baker's yeast).